The sequence spans 612 residues: MGWEYAQVHLKYTIPFGVVLAAVYRPLMSRLDVFKLVFLITVSFFWVVKGLEANSCRLLLFLPCMLILRGVLLRLTNADSPWDSYLIKNRIWTYPPGVVVGLTAWDIPAEELFFFVIQTFNTSLLYMILSKPTFHPIYLSKKTGWGKIAGQILFASAIIFGLVSVSSGGEGMYMGLILIWACPFLLFLWSISYQFIVNLPWTNTALPIALPTLYLWVVDTFALRRGTWSITSGTKYGVVLWDGLEIEEAVFFLLTNTLIVFGLIACDNNLAILDTFPEHFPRTKGVPSLLTIIRTLILPKEKYDEERIQGLVSAVALLRKKSRSFYLASGTFEGRLRIDLIRLYAFCRAADDLVDEAPSVDDSRASIEKLRKFLDLAYEENQEEPSQRLREYVTSSIPEMFHMALLQLPTYYLPKQPLDDLLKGFDTDLLFDRKSGAFPIETTEDLDIYGSRVAGTVAELCNHLILYHTPEAVPEDIQREVVASGQEMGIALQYVNIARDIKTDAEIDRVYLPLSWLKEAQLTPEDVIQQPHGPTIEALRHKLLDRAFEKYNMAKGAIDKLPSEGKGPIRVAVESYMEIGRVLREKGPTMKKGRATVPKMRRIRVAWSALNK.

The interval 1–268 is lycopene beta-cyclase; sequence MGWEYAQVHL…IVFGLIACDN (268 aa). The next 7 helical transmembrane spans lie at 3–23, 31–51, 112–130, 148–168, 171–191, 203–223, and 246–266; these read WEYA…LAAV, LDVF…VKGL, LFFF…MILS, IAGQ…VSSG, GMYM…LWSI, NTAL…TFAL, and IEEA…LIAC. The tract at residues 275-612 is phytoene synthase; sequence TFPEHFPRTK…IRVAWSALNK (338 aa).

In the N-terminal section; belongs to the lycopene beta-cyclase family. The protein in the C-terminal section; belongs to the phytoene/squalene synthase family.

It is found in the membrane. The catalysed reaction is all-trans-lycopene = gamma-carotene. It carries out the reaction gamma-carotene = all-trans-beta-carotene. The enzyme catalyses 2 (2E,6E,10E)-geranylgeranyl diphosphate = 15-cis-phytoene + 2 diphosphate. It functions in the pathway carotenoid biosynthesis; beta-carotene biosynthesis. The protein operates within carotenoid biosynthesis; phytoene biosynthesis; all-trans-phytoene from geranylgeranyl diphosphate: step 1/1. Bifunctional enzyme; part of the car gene cluster that mediates the biosynthesis of neurosporaxanthin, a carboxylic apocarotenoid acting as an essential protective pigments and leading to orange pigmentation. CarAR catalyzes the first step of the pathway by converting geranylgeranyl diphosphate to phytoene, as well as the later cyclization step that transforms the carB product lycopene into gamma-carotene. CarAR also converts part of gamma-carotene into beta-carotene. Neurosporaxanthin is synthesized from geranyl-geranyl pyrophosphate (GGPP) through several enzymatic activities. Phytoene synthase activity performed by the bifunctional enzyme carAR first produces phytoene from geranyl-geranyl pyrophosphate (GGPP). The phytoene dehydrogenase carB then introduces 4 desaturations to lead to lycopene which is substrate of the carotene cyclase activity of carAR that leads to the production of gamma-carotene. CarB then performs a 5th desaturation reaction to yield torulene. Torulene is the substrate of the dioxidase carT that breaks the molecule, removing five carbon atoms to yield beta-apo-4'-carotenal, whereas the aldehyde dehydrogenase carD mediates the last step by converting beta-apo-4'-carotenal into neurosporaxanthin. The polypeptide is Bifunctional lycopene cyclase/phytoene synthase (Fusarium fujikuroi (Bakanae and foot rot disease fungus)).